The sequence spans 237 residues: Ubiquinone biosynthesis O-methyltransferase (237 aa).

R38, G57, D78, and M122 together coordinate S-adenosyl-L-methionine.

Belongs to the methyltransferase superfamily. UbiG/COQ3 family.

It carries out the reaction a 3-demethylubiquinol + S-adenosyl-L-methionine = a ubiquinol + S-adenosyl-L-homocysteine + H(+). It catalyses the reaction a 3-(all-trans-polyprenyl)benzene-1,2-diol + S-adenosyl-L-methionine = a 2-methoxy-6-(all-trans-polyprenyl)phenol + S-adenosyl-L-homocysteine + H(+). It functions in the pathway cofactor biosynthesis; ubiquinone biosynthesis. Functionally, O-methyltransferase that catalyzes the 2 O-methylation steps in the ubiquinone biosynthetic pathway. This Methylococcus capsulatus (strain ATCC 33009 / NCIMB 11132 / Bath) protein is Ubiquinone biosynthesis O-methyltransferase.